A 468-amino-acid polypeptide reads, in one-letter code: 3-isopropylmalate dehydratase large subunit (468 aa).

Residues Cys-349, Cys-409, and Cys-412 each coordinate [4Fe-4S] cluster.

The protein belongs to the aconitase/IPM isomerase family. LeuC type 1 subfamily. Heterodimer of LeuC and LeuD. Requires [4Fe-4S] cluster as cofactor.

The catalysed reaction is (2R,3S)-3-isopropylmalate = (2S)-2-isopropylmalate. It functions in the pathway amino-acid biosynthesis; L-leucine biosynthesis; L-leucine from 3-methyl-2-oxobutanoate: step 2/4. Functionally, catalyzes the isomerization between 2-isopropylmalate and 3-isopropylmalate, via the formation of 2-isopropylmaleate. In Jannaschia sp. (strain CCS1), this protein is 3-isopropylmalate dehydratase large subunit.